A 185-amino-acid polypeptide reads, in one-letter code: Ribosome-recycling factor (185 aa).

This sequence belongs to the RRF family.

It localises to the cytoplasm. In terms of biological role, responsible for the release of ribosomes from messenger RNA at the termination of protein biosynthesis. May increase the efficiency of translation by recycling ribosomes from one round of translation to another. The sequence is that of Ribosome-recycling factor from Shewanella loihica (strain ATCC BAA-1088 / PV-4).